Reading from the N-terminus, the 150-residue chain is MQVILLEKIQKLGDLGDLANVKAGYARNFLIPRSKVKPATKTNLAKFKLIKAELQASEAKILKNAQVIESKMTGTVCTIQANAGEEGKLFGSINTSDIQISLAASGFEVEKRNINMPETIHHTGKYEISVDLHTDITVSIKVVIEGFQEA.

Belongs to the bacterial ribosomal protein bL9 family.

In terms of biological role, binds to the 23S rRNA. This chain is Large ribosomal subunit protein bL9, found in Ruthia magnifica subsp. Calyptogena magnifica.